The primary structure comprises 200 residues: TATA-box-binding protein 1 (200 aa).

N-acetylthreonine is present on Thr2. Tandem repeats lie at residues 25-101 (LQNI…ARIV) and 115-192 (IQNI…YPVL).

The protein belongs to the TBP family. As to quaternary structure, belongs to the TFIID complex together with the TBP-associated factors (TAFs). Binds DNA as monomer. Interacts with TAF1 (via N-terminus). Interacts with MEE12/CCG1. Associates with PWP2 in the nucleus. Component of a nuclear protein complex containing at least TATA binding proteins (TBPs, e.g. TBP1 and TBP2) and ATX1.

It is found in the nucleus. General transcription factor that functions at the core of the DNA-binding multiprotein factor TFIID. Binding of TFIID to the TATA box is the initial transcriptional step of the pre-initiation complex (PIC), playing a role in the activation of eukaryotic genes transcribed by RNA polymerase II. This chain is TATA-box-binding protein 1, found in Arabidopsis thaliana (Mouse-ear cress).